The sequence spans 410 residues: Peptidase T (410 aa).

H79 lines the Zn(2+) pocket. Residue D81 is part of the active site. D142 contributes to the Zn(2+) binding site. E176 acts as the Proton acceptor in catalysis. Positions 177, 199, and 381 each coordinate Zn(2+).

Belongs to the peptidase M20B family. Zn(2+) serves as cofactor.

It is found in the cytoplasm. The catalysed reaction is Release of the N-terminal residue from a tripeptide.. Cleaves the N-terminal amino acid of tripeptides. This chain is Peptidase T, found in Bacillus thuringiensis (strain Al Hakam).